The chain runs to 297 residues: HTH-type transcriptional regulator ArgP (297 aa).

In terms of domain architecture, HTH lysR-type spans 4–60 (PDYRTLQALDAVIRERGFERAAQKLCITQSAVSQRIKQLENMFGQPLLVRTVPPRPT). The H-T-H motif DNA-binding region spans 21–40 (FERAAQKLCITQSAVSQRIK).

This sequence belongs to the LysR transcriptional regulatory family. In terms of assembly, homodimer.

In terms of biological role, controls the transcription of genes involved in arginine and lysine metabolism. In Klebsiella pneumoniae (strain 342), this protein is HTH-type transcriptional regulator ArgP.